Reading from the N-terminus, the 331-residue chain is Phospholipase A2 inhibitor (331 aa).

An N-terminal signal peptide occupies residues 1–23 (MKSSVPSLLIACLVMSLNSYTQQ). Residue N35 is glycosylated (N-linked (GlcNAc...) asparagine). LRR repeat units follow at residues 78-101 (LPNL…LFRN), 103-125 (PQLH…IFTN), 127-149 (SSLI…WFQT), 150-173 (LGEL…CFDK), 175-197 (KKLT…MFSG), 199-221 (DNLE…TFHW), 223-244 (PKLT…FFQP), and 245-268 (LEQL…VYKT). An N-linked (GlcNAc...) asparagine glycan is attached at N125. N-linked (GlcNAc...) asparagine glycosylation is present at N232. N-linked (GlcNAc...) asparagine glycosylation occurs at N271. One can recognise an LRRCT domain in the interval 279-330 (NPWACDCRLDNLLTWVNEHNIHLYSKEEIVCASPKHFKGECATSLHKSQICP).

As to quaternary structure, homotrimer.

The protein resides in the secreted. Inhibits the enzymatic activity of the basic phospholipase A2 (PLA2). The chain is Phospholipase A2 inhibitor from Gloydius brevicaudus siniticus (Chinese mamushi).